The primary structure comprises 110 residues: Ig kappa chain V region 3547 (110 aa).

A framework-1 region spans residues 1–23 (AYDMTQTPSSVSAAVGGTVTINC). Positions 24–34 (QASEDISANLA) are complementarity-determining-1. A framework-2 region spans residues 35 to 49 (WYQQKPGQPPKLLIY). A complementarity-determining-2 region spans residues 50 to 56 (AASDLAS). Residues 57–88 (GVPSRFKGSGSGTEYTLTISGVQCADAATYYC) form a framework-3 region. Positions 89 to 99 (QSADYSGSAVT) are complementarity-determining-3. Residues 100–109 (FGGGTEVVVK) are framework-4.

This is Ig kappa chain V region 3547 from Oryctolagus cuniculus (Rabbit).